A 344-amino-acid polypeptide reads, in one-letter code: Dihydroorotase (344 aa).

Residues His13 and His15 each contribute to the Zn(2+) site. Substrate-binding positions include 15 to 17 and Asn41; that span reads HLR. Zn(2+) is bound by residues Lys99, His136, and His174. Residue Lys99 is modified to N6-carboxylysine. A substrate-binding site is contributed by His136. Substrate is bound at residue Leu219. Asp247 is a Zn(2+) binding site. The active site involves Asp247. 2 residues coordinate substrate: His251 and Ala263.

It belongs to the metallo-dependent hydrolases superfamily. DHOase family. Class II DHOase subfamily. As to quaternary structure, homodimer. The cofactor is Zn(2+).

It catalyses the reaction (S)-dihydroorotate + H2O = N-carbamoyl-L-aspartate + H(+). The protein operates within pyrimidine metabolism; UMP biosynthesis via de novo pathway; (S)-dihydroorotate from bicarbonate: step 3/3. Its function is as follows. Catalyzes the reversible cyclization of carbamoyl aspartate to dihydroorotate. The protein is Dihydroorotase of Acinetobacter baylyi (strain ATCC 33305 / BD413 / ADP1).